We begin with the raw amino-acid sequence, 98 residues long: Ferredoxin-like protein (98 aa).

Positions 57 to 87 constitute a 4Fe-4S ferredoxin-type domain; the sequence is GQVEVTVDGCIECGTCRVIAEPTGDIEWSHP.

It to ferredoxins from P.putida and C.tartarivorum, ferredoxin I from A.vinelandii, ferredoxin II from D.desulfuricans.

Could be a 3Fe-4S cluster-containing protein. In Bradyrhizobium diazoefficiens (strain JCM 10833 / BCRC 13528 / IAM 13628 / NBRC 14792 / USDA 110), this protein is Ferredoxin-like protein (fixX).